The chain runs to 324 residues: MSVEDSIISIDSLQDQGINAGDINKLKSAGICSITSVLSTTRRNLTKIKGLSEIKVEKIKEAAGKIKKYGFLPATIVAESRTKVFHITTGSKQFDEILGGGIQSMSITEVFGEFRCGKTQLCHTLCVAAQLPTDMGGGEGRVAYIDTEGTFRPDRIRSIAERYGVDADICLENISYARALNSEHQIELVEQLGNELAEGTFRLLIVDSIMACFRVDYSGRGELNERQQKLNQHLSNLTRVAEDYNIAVFLTNQVQSDPGASALFAAADGRKPVGGHVLAHASATRILLRKGRGEERVAKLQDSPNMPEKECVYVIGEGGIKDTD.

112-119 serves as a coordination point for ATP; the sequence is GEFRCGKT. Arg214 serves as a coordination point for dsDNA. SsDNA-binding residues include Arg214, Tyr217, Arg220, Arg226, and Arg296. DsDNA-binding residues include Arg220 and Arg226.

Belongs to the RecA family. DMC1 subfamily. As to quaternary structure, double stacked ring-shaped homooctamer.

It is found in the nucleus. Functionally, required for meiotic recombination, synaptonemal complex formation and cell cycle progression. The protein is Meiotic recombination protein DLH1 (DLH1) of Candida albicans (Yeast).